The sequence spans 463 residues: UDP-N-acetylmuramoylalanine--D-glutamate ligase (463 aa).

109–115 (GTDGKST) lines the ATP pocket.

The protein belongs to the MurCDEF family.

It is found in the cytoplasm. It carries out the reaction UDP-N-acetyl-alpha-D-muramoyl-L-alanine + D-glutamate + ATP = UDP-N-acetyl-alpha-D-muramoyl-L-alanyl-D-glutamate + ADP + phosphate + H(+). It participates in cell wall biogenesis; peptidoglycan biosynthesis. Cell wall formation. Catalyzes the addition of glutamate to the nucleotide precursor UDP-N-acetylmuramoyl-L-alanine (UMA). In Leptospira interrogans serogroup Icterohaemorrhagiae serovar Lai (strain 56601), this protein is UDP-N-acetylmuramoylalanine--D-glutamate ligase.